The chain runs to 80 residues: Crustacean hyperglycemic hormones (80 aa).

3 cysteine pairs are disulfide-bonded: Cys-13-Cys-49, Cys-29-Cys-45, and Cys-32-Cys-58. Residue Val-78 is modified to Valine amide.

The protein belongs to the arthropod CHH/MIH/GIH/VIH hormone family. As to expression, produced by the medulla terminalis X-organ in the eyestalks and transported to the sinus gland where they are stored and released.

It localises to the secreted. Functionally, hormone found in the sinus gland of isopods and decapods which controls the blood sugar level. Has a secretagogue action over the amylase released from the midgut gland. May act as a stress hormone and may be involved in the control of molting and reproduction. This Penaeus vannamei (Whiteleg shrimp) protein is Crustacean hyperglycemic hormones.